The primary structure comprises 2207 residues: DNA polymerase epsilon catalytic subunit A (2207 aa).

3 disordered regions span residues 1–20, 1201–1233, and 1934–1961; these read MPSRKPSKYGNKFRSGAASF, SMEKLKSSSPQKASGKRKHPENQTKTSLDPFAS, and RPESDDSSTPRLTQIPIGQPEPGQENEE. Zn(2+) contacts are provided by Cys-2075, Cys-2078, Cys-2113, and Cys-2116. The segment at 2075 to 2116 adopts a CysA-type zinc-finger fold; it reads CSACCLIRDLDLCRDEDVLPERGSGSGPDSATSSRPWCCPFC. [4Fe-4S] cluster contacts are provided by Cys-2147, Cys-2150, Cys-2162, and Cys-2164. The CysB motif motif lies at 2147-2164; that stretch reads CSKCGTLKISEFMEHCSC.

The protein belongs to the DNA polymerase type-B family. Heterotetramer. Consists of 4 subunits: pol2, dpb2, dpb3 and dpb4. [4Fe-4S] cluster serves as cofactor.

Its subcellular location is the nucleus. The enzyme catalyses DNA(n) + a 2'-deoxyribonucleoside 5'-triphosphate = DNA(n+1) + diphosphate. Its function is as follows. DNA polymerase II participates in chromosomal DNA replication. The polypeptide is DNA polymerase epsilon catalytic subunit A (pol2) (Emericella nidulans (strain FGSC A4 / ATCC 38163 / CBS 112.46 / NRRL 194 / M139) (Aspergillus nidulans)).